A 237-amino-acid polypeptide reads, in one-letter code: MKKALYLGAVAFGVVFSMASANEPNIDFNPPNYVEETPSKEFIPELNKLGSLFGQGERPLFADRRAMKPNDLITIVVSEKASANYSSSKDYKSASGGNSTPPRLTYNGLDERKKKEAEYLDDKNNYNFTKSSNNTNFKGGGSQKKSEDLEIVLSARIIKVLENGNYFIYGNKEVLVDGEKQILKVSGVIRPYDIERNNTIQSKFLADAKIEYTNLGHLSDSNKKKFAADAMETQMPY.

The first 21 residues, 1 to 21 (MKKALYLGAVAFGVVFSMASA), serve as a signal peptide directing secretion. Residues 87-111 (SSKDYKSASGGNSTPPRLTYNGLDE) form a disordered region.

It belongs to the FlgH family. As to quaternary structure, the basal body constitutes a major portion of the flagellar organelle and consists of four rings (L,P,S, and M) mounted on a central rod.

It is found in the cell outer membrane. The protein localises to the bacterial flagellum basal body. Functionally, assembles around the rod to form the L-ring and probably protects the motor/basal body from shearing forces during rotation. This Helicobacter pylori (strain J99 / ATCC 700824) (Campylobacter pylori J99) protein is Flagellar L-ring protein (flgH).